Reading from the N-terminus, the 181-residue chain is ATP synthase subunit delta (181 aa).

This sequence belongs to the ATPase delta chain family. As to quaternary structure, F-type ATPases have 2 components, F(1) - the catalytic core - and F(0) - the membrane proton channel. F(1) has five subunits: alpha(3), beta(3), gamma(1), delta(1), epsilon(1). F(0) has three main subunits: a(1), b(2) and c(10-14). The alpha and beta chains form an alternating ring which encloses part of the gamma chain. F(1) is attached to F(0) by a central stalk formed by the gamma and epsilon chains, while a peripheral stalk is formed by the delta and b chains.

The protein resides in the cell membrane. Its function is as follows. F(1)F(0) ATP synthase produces ATP from ADP in the presence of a proton or sodium gradient. F-type ATPases consist of two structural domains, F(1) containing the extramembraneous catalytic core and F(0) containing the membrane proton channel, linked together by a central stalk and a peripheral stalk. During catalysis, ATP synthesis in the catalytic domain of F(1) is coupled via a rotary mechanism of the central stalk subunits to proton translocation. In terms of biological role, this protein is part of the stalk that links CF(0) to CF(1). It either transmits conformational changes from CF(0) to CF(1) or is implicated in proton conduction. In Shouchella clausii (strain KSM-K16) (Alkalihalobacillus clausii), this protein is ATP synthase subunit delta.